Here is a 189-residue protein sequence, read N- to C-terminus: Putative manganese efflux pump MntP (189 aa).

The next 6 helical transmembrane spans lie at 3 to 23, 41 to 61, 65 to 85, 103 to 123, 132 to 152, and 167 to 187; these read LSAT…ASIG, LIFG…GLFA, IMEW…MRMI, GFWL…AIGV, IVHT…LGMM, and ILGG…HLGY.

It belongs to the MntP (TC 9.B.29) family.

The protein localises to the cell inner membrane. Functionally, probably functions as a manganese efflux pump. This chain is Putative manganese efflux pump MntP, found in Serratia proteamaculans (strain 568).